The chain runs to 82 residues: Small ribosomal subunit protein bS16c (82 aa).

This sequence belongs to the bacterial ribosomal protein bS16 family.

It is found in the plastid. It localises to the chloroplast. This chain is Small ribosomal subunit protein bS16c, found in Porphyra purpurea (Red seaweed).